We begin with the raw amino-acid sequence, 644 residues long: ATP-dependent zinc metalloprotease FtsH (644 aa).

Over 1–4 (MAKN) the chain is Cytoplasmic. The chain crosses the membrane as a helical span at residues 5 to 25 (LILWLVIAVVLMSVFQSFGPS). Topologically, residues 26 to 98 (ESNGRKVDYS…VGEPPEEPSL (73 aa)) are periplasmic. Residues 99 to 119 (LASIFISWFPMLLLIGVWIFF) traverse the membrane as a helical segment. At 120-644 (MRQMQGGGGK…NTMSEQLGDK (525 aa)) the chain is on the cytoplasmic side. 192–199 (GPPGTGKT) contributes to the ATP binding site. Zn(2+) is bound at residue His-414. Glu-415 is an active-site residue. His-418 and Asp-492 together coordinate Zn(2+). Residues 599-644 (RPPAGWEDPNGTNNSDSNGTPQAPRPVDEPRTPNPGNTMSEQLGDK) form a disordered region. Composition is skewed to polar residues over residues 608–619 (NGTNNSDSNGTP) and 632–644 (NPGN…LGDK).

It in the central section; belongs to the AAA ATPase family. In the C-terminal section; belongs to the peptidase M41 family. Homohexamer. Zn(2+) is required as a cofactor.

It localises to the cell inner membrane. In terms of biological role, acts as a processive, ATP-dependent zinc metallopeptidase for both cytoplasmic and membrane proteins. Plays a role in the quality control of integral membrane proteins. The polypeptide is ATP-dependent zinc metalloprotease FtsH (Salmonella typhi).